The sequence spans 550 residues: Calcium-dependent protein kinase 20 (550 aa).

The tract at residues 1–58 is disordered; sequence MGNCCVTPEGSGRGRKKQQQEQKQKQKEPKQQQQQQKKGKKPNPFSIEYNRSSAPSGH. The N-myristoyl glycine moiety is linked to residue glycine 2. Residues 18–30 are compositionally biased toward basic and acidic residues; it reads QQQEQKQKQKEPK. Residues 75–333 form the Protein kinase domain; the sequence is YELGGELGRG…AQQVLDHPWL (259 aa). Residues 81-89 and lysine 104 each bind ATP; that span reads LGRGEFGVT. Aspartate 199 (proton acceptor) is an active-site residue. Residues 339–369 form an autoinhibitory domain region; it reads APNVNLGETVKARLQQFSVMNKFKKHALRVI. EF-hand domains lie at 376 to 411, 412 to 447, 448 to 483, and 484 to 519; these read EEVAGIKDMFEKMDLNKDNMINFDELKLGLHKLGHQ, MADADVQILMDAADVDGNGSLDYGEFVALSVHLRKI, GNDEHLHKAFAYFDRNQSGYIEIDELRESLADDLGA, and NHEEVINAIIRDVDTDKDGKISYDEFAAMMKAGTDW. Ca(2+) is bound by residues aspartate 389, asparagine 391, aspartate 393, methionine 395, glutamate 400, aspartate 425, aspartate 427, asparagine 429, serine 431, glutamate 436, aspartate 461, asparagine 463, serine 465, tyrosine 467, glutamate 472, aspartate 497, aspartate 499, aspartate 501, lysine 503, and glutamate 508.

It belongs to the protein kinase superfamily. Ser/Thr protein kinase family. CDPK subfamily. In terms of tissue distribution, expressed in roots and leaf blades.

It localises to the membrane. It catalyses the reaction L-seryl-[protein] + ATP = O-phospho-L-seryl-[protein] + ADP + H(+). The catalysed reaction is L-threonyl-[protein] + ATP = O-phospho-L-threonyl-[protein] + ADP + H(+). Its activity is regulated as follows. Activated by calcium. Autophosphorylation may play an important role in the regulation of the kinase activity. Functionally, may play a role in signal transduction pathways that involve calcium as a second messenger. This chain is Calcium-dependent protein kinase 20, found in Oryza sativa subsp. japonica (Rice).